A 356-amino-acid polypeptide reads, in one-letter code: Protein pelota homolog (356 aa).

The protein belongs to the eukaryotic release factor 1 family. Pelota subfamily. In terms of assembly, monomer. It depends on a divalent metal cation as a cofactor.

It is found in the cytoplasm. Functionally, may function in recognizing stalled ribosomes, interact with stem-loop structures in stalled mRNA molecules, and effect endonucleolytic cleavage of the mRNA. May play a role in the release non-functional ribosomes and degradation of damaged mRNAs. Has endoribonuclease activity. The sequence is that of Protein pelota homolog from Staphylothermus marinus (strain ATCC 43588 / DSM 3639 / JCM 9404 / F1).